We begin with the raw amino-acid sequence, 231 residues long: 2-C-methyl-D-erythritol 4-phosphate cytidylyltransferase (231 aa).

Belongs to the IspD/TarI cytidylyltransferase family. IspD subfamily.

The enzyme catalyses 2-C-methyl-D-erythritol 4-phosphate + CTP + H(+) = 4-CDP-2-C-methyl-D-erythritol + diphosphate. It participates in isoprenoid biosynthesis; isopentenyl diphosphate biosynthesis via DXP pathway; isopentenyl diphosphate from 1-deoxy-D-xylulose 5-phosphate: step 2/6. In terms of biological role, catalyzes the formation of 4-diphosphocytidyl-2-C-methyl-D-erythritol from CTP and 2-C-methyl-D-erythritol 4-phosphate (MEP). The protein is 2-C-methyl-D-erythritol 4-phosphate cytidylyltransferase of Xylella fastidiosa (strain 9a5c).